Consider the following 441-residue polypeptide: MSGPYDEASEEITDSFWEVGNYKRTVKRIDDGHRLCNDLMSCVQERAKIEKAYAQQLTDWAKRWRQLIEKGPQYGSLERAWGAMMTEADKVSELHQEVKNSLLNEDLEKVKNWQKDAYHKQIMGGFKETKEAEDGFRKAQKPWAKKMKELEAAKKAYHLACKEEKLAMTREMNSKTEQSVTPEQQKKLVDKVDKCRQDVQKTQEKYEKVLEDVGKTTPQYMEGMEQVFEQCQQFEEKRLVFLKEVLLDIKRHLNLAENSSYIHVYRELEQAIRGADAQEDLRWFRSTSGPGMPMNWPQFEEWNPDLPHTAAKKEKQPKKAEGAALSNATGAVESTSQAGDRGSVSSYDRGQAYATEWSDDESGNPFGGNEANGGANPFEDDAKGVRVRALYDYDGQEQDELSFKAGDELTKLGEEDEQGWCRGRLDSGQLGLYPANYVEAI.

2 positions are modified to phosphoserine: Ser2 and Ser76. One can recognise an F-BAR domain in the interval 10–280 (EEITDSFWEV…AIRGADAQED (271 aa)). A coiled-coil region spans residues 23–272 (KRTVKRIDDG…HVYRELEQAI (250 aa)). The residue at position 181 (Thr181) is a Phosphothreonine. The segment at 310 to 380 (AAKKEKQPKK…ANGGANPFED (71 aa)) is disordered. Residues 311-321 (AKKEKQPKKAE) show a composition bias toward basic and acidic residues. Residues 326 to 348 (SNATGAVESTSQAGDRGSVSSYD) show a composition bias toward polar residues. A phosphoserine mark is found at Ser343, Ser345, Ser346, Ser358, and Ser362. One can recognise an SH3 domain in the interval 382–441 (AKGVRVRALYDYDGQEQDELSFKAGDELTKLGEEDEQGWCRGRLDSGQLGLYPANYVEAI). Tyr391 carries the phosphotyrosine modification. Phosphoserine is present on residues Ser402 and Ser427.

It belongs to the PACSIN family. Homodimer. May form heterooligomers with other PACSINs. Interacts with MAPT. Interacts with TRPV4. Interacts (via SH3 domain) with SYNJ1 and WASL. Interacts (via SH3 domain) with DNM1; the interaction is reduced by DNM1 phosphorylation. Interacts with DNM2 and DNM3. Interacts with both COBL and DBNL. Identified in a complex composed of COBL, PACSIN1 and WASL. Interacts with EHD1 and EHD3. Post-translationally, phosphorylated by casein kinase 2 (CK2) and protein kinase C (PKC). Highly expressed in brain (at protein level).

It localises to the cytoplasm. The protein resides in the cell projection. Its subcellular location is the synapse. The protein localises to the synaptosome. It is found in the ruffle membrane. It localises to the membrane. The protein resides in the cytoplasmic vesicle membrane. Its subcellular location is the cytosol. The protein localises to the cell membrane. Functionally, binds to membranes via its F-BAR domain and mediates membrane tubulation. Plays a role in the reorganization of the microtubule cytoskeleton via its interaction with MAPT; this decreases microtubule stability and inhibits MAPT-induced microtubule polymerization. Plays a role in cellular transport processes by recruiting DNM1, DNM2 and DNM3 to membranes. Plays a role in the reorganization of the actin cytoskeleton and in neuron morphogenesis via its interaction with COBL and WASL, and by recruiting COBL to the cell cortex. Plays a role in the regulation of neurite formation, neurite branching and the regulation of neurite length. Required for normal synaptic vesicle endocytosis; this process retrieves previously released neurotransmitters to accommodate multiple cycles of neurotransmission. Required for normal excitatory and inhibitory synaptic transmission. This Rattus norvegicus (Rat) protein is Protein kinase C and casein kinase substrate in neurons protein 1 (Pacsin1).